A 519-amino-acid polypeptide reads, in one-letter code: T-box transcription factor TBX5 (519 aa).

The tract at residues 1 to 46 (MADTEEAYGMPDTPVEAEPKELQCEPKQDNQLGASSKTPTSPPAAF) is disordered. Residues 17-28 (AEPKELQCEPKQ) are compositionally biased toward basic and acidic residues. A compositionally biased stretch (polar residues) spans 29–39 (DNQLGASSKTP). The segment at residues 63–238 (LWLKFHEVGT…NNPFAKGFRG (176 aa)) is a DNA-binding region (T-box). Disordered regions lie at residues 254-282 (EYPV…RNIT), 293-312 (CENG…SAYT), and 326-372 (KRKV…TSFR). The segment covering 262 to 282 (TVRQKVSSNHSPFSQETRNIT) has biased composition (polar residues). Low complexity predominate over residues 298 to 309 (SSTSQDLLPSSS). Basic and acidic residues predominate over residues 328–342 (KVSEEPAEHSYKKPY).

Monomer. Homodimer (via the T-box); binds DNA as homodimer.

The protein localises to the nucleus. It localises to the cytoplasm. Its function is as follows. DNA-binding protein that regulates the transcription of several genes and is involved in heart development and limb pattern formation. May bind to the core DNA motif of promoters. The polypeptide is T-box transcription factor TBX5 (tbx5) (Xenopus laevis (African clawed frog)).